The following is a 607-amino-acid chain: UvrABC system protein C (607 aa).

The region spanning 16–94 (GRPGVYRMFD…IKEWRPPYNI (79 aa)) is the GIY-YIG domain. A UVR domain is found at 203–238 (NALTDELSAGMEQAASTLDFEKAAELRDQISLLRRV).

The protein belongs to the UvrC family. Interacts with UvrB in an incision complex.

Its subcellular location is the cytoplasm. Its function is as follows. The UvrABC repair system catalyzes the recognition and processing of DNA lesions. UvrC both incises the 5' and 3' sides of the lesion. The N-terminal half is responsible for the 3' incision and the C-terminal half is responsible for the 5' incision. This is UvrABC system protein C from Pseudomonas protegens (strain DSM 19095 / LMG 27888 / CFBP 6595 / CHA0).